Here is a 210-residue protein sequence, read N- to C-terminus: Ribosomal RNA large subunit methyltransferase E (210 aa).

The S-adenosyl-L-methionine site is built by Gly61, Trp63, Asp81, Asp97, and Asp122. The active-site Proton acceptor is Lys162. Basic and acidic residues predominate over residues 187–196 (KPEASRKRSP). Residues 187–210 (KPEASRKRSPEVYALGQGKRAHMK) form a disordered region.

Belongs to the class I-like SAM-binding methyltransferase superfamily. RNA methyltransferase RlmE family.

The protein localises to the cytoplasm. It carries out the reaction uridine(2552) in 23S rRNA + S-adenosyl-L-methionine = 2'-O-methyluridine(2552) in 23S rRNA + S-adenosyl-L-homocysteine + H(+). Its function is as follows. Specifically methylates the uridine in position 2552 of 23S rRNA at the 2'-O position of the ribose in the fully assembled 50S ribosomal subunit. This is Ribosomal RNA large subunit methyltransferase E from Stenotrophomonas maltophilia (strain R551-3).